The sequence spans 2406 residues: Highly reducing polyketide synthase dmxL2 (2406 aa).

A Ketosynthase family 3 (KS3) domain is found at 1–399 (MEAFWSASKK…GTNAHAVLDD (399 aa)). Cys-130 is a catalytic residue. Cys-130 acts as the For beta-ketoacyl synthase activity in catalysis. The tract at residues 414 to 476 (GHASNGTNGT…GPTDGPTSRP (63 aa)) is disordered. Residues 417–448 (SNGTNGTLTNGHILNGEHTSNGMNGTLTNGHA) show a composition bias toward polar residues. Residues 574–911 (FVFTGQGAQW…LAGSLFTQGY (338 aa)) are malonyl-CoA:ACP transacylase (MAT) domain. The active-site For malonyltransferase activity is Ser-665. Positions 962–1096 (PSLLGSPSPS…GLLVIEYEAA (135 aa)) are N-terminal hotdog fold. The PKS/mFAS DH domain maps to 962–1278 (PSLLGSPSPS…CAEIAGASSN (317 aa)). The interval 964 to 1273 (LLGSPSPSLA…IEGFLCAEIA (310 aa)) is dehydratase (DH) domain. His-994 (proton acceptor; for dehydratase activity) is an active-site residue. The interval 1124 to 1278 (VHRLDPSGFY…CAEIAGASSN (155 aa)) is C-terminal hotdog fold. Residue Asp-1189 is the Proton donor; for dehydratase activity of the active site. Positions 1694–2006 (GMLGSVCLEP…TGKHLGKIAL (313 aa)) are enoylreductase (ER) domain. The interval 2032 to 2210 (GVYLLVGGLG…TTVDLGIMRD (179 aa)) is ketoreductase (KR) domain. Residues 2318–2395 (EASDSVLEAL…TFCNRIAAKS (78 aa)) enclose the Carrier domain. Ser-2355 bears the O-(pantetheine 4'-phosphoryl)serine mark.

Its pathway is secondary metabolite biosynthesis. Its function is as follows. Highly reducing polyketide synthase; part of the gene cluster that mediates the biosynthesis of the dimeric xanthones cryptosporioptides. The pathway begins with the synthesis of atrochrysone thioester by the polyketide synthase dmx-nrPKS. The atrochrysone carboxyl ACP thioesterase dmxR1 then breaks the thioester bond and releases the atrochrysone carboxylic acid from dmx-nrPKS. Atrochrysone carboxylic acid is decarboxylated by the decarboxylase dmxR15, and oxidized by the anthrone oxygenase dmxR16 to yield emodin. Emodin is then reduced to emodin hydroquinone by the oxidoreductase dmxR7. A-ring reduction by the short chain dehydrogenase dmxR18, dehydration by the scytalone dehydratase-like protein dmxR17 and probable spontaneous re-oxidation, results in overall deoxygenation to chrysophanol. Baeyer-Villiger oxidation by the Baeyer-Villiger monooxygenase (BVMO) dmxR6 then yields monodictylactone in equilibrium with monodictyphenone. In the case of the cryptosporioptides biosynthesis, monodictylactone is reduced at C-12 to an alcohol (by the short chain dehydrogenases dmxR12 or dmxR8) and hydroxylated at C-5 by dmxR9, yielding the electron-rich aromatic which could eliminate H(2)O to form the ortho-quinonemethide, followed by tautomerisation to paraquinone and complete the formal reduction to produce the 10-methylgroup. Conjugate addition of C-4a-OH to the resulting paraquinone by the monooxygenase dmxR10 then gives cyclohexadienone, which is then reduced at C-5 by the short chain dehydrogenase dmxR3 to give the dihydroxanthone. The 6,7-epoxide in the cryptosporioptides could be introduced by the cytochrome P450 monooxygenase dmxL3. The highly reducing PKS dmxL2 manufactures butyrate, which is further carboxylated by dmxL1 to form ethylmalonate. It is not yet clear whether the carboxylation occurs while the butyrate is attached to the ACP of dmxL2, but this unusual fungal metabolite could then be esterified to O-5 by the O-acetyltransferase dmxR13. Finally, dimerization performed by dmxR5 gives the observed dimers cryptosporioptides A, B and C as the final products of the pathway. The polypeptide is Highly reducing polyketide synthase dmxL2 (Cryptosporiopsis sp. (strain 8999)).